The chain runs to 30 residues: Cycloviolacin-H1 (30 aa).

The segment at residues glycine 1–asparagine 30 is a cross-link (cyclopeptide (Gly-Asn)). Cystine bridges form between cysteine 4/cysteine 20, cysteine 8/cysteine 22, and cysteine 13/cysteine 27.

Belongs to the cyclotide family. Bracelet subfamily. Post-translationally, this is a cyclic peptide.

Probably participates in a plant defense mechanism. The sequence is that of Cycloviolacin-H1 from Viola hederacea (Australian violet).